Here is a 211-residue protein sequence, read N- to C-terminus: Small ribosomal subunit protein eS1 (211 aa).

Residues 192 to 211 (NGLPPYEAVGDRATPELASY) are disordered.

Belongs to the eukaryotic ribosomal protein eS1 family.

This is Small ribosomal subunit protein eS1 from Methanopyrus kandleri (strain AV19 / DSM 6324 / JCM 9639 / NBRC 100938).